A 463-amino-acid polypeptide reads, in one-letter code: tRNA-2-methylthio-N(6)-dimethylallyladenosine synthase (463 aa).

The 121-residue stretch at 5 to 125 folds into the MTTase N-terminal domain; that stretch reads RKLHIKSYGC…LPQLLAKAEQ (121 aa). [4Fe-4S] cluster contacts are provided by Cys14, Cys50, Cys88, Cys166, Cys170, and Cys173. The 233-residue stretch at 152 to 384 folds into the Radical SAM core domain; sequence RARGISAFVT…QQLIDQQQSA (233 aa). In terms of domain architecture, TRAM spans 387–449; that stretch reads KAAIGRTVEV…RYSLLGELAS (63 aa).

The protein belongs to the methylthiotransferase family. MiaB subfamily. As to quaternary structure, monomer. The cofactor is [4Fe-4S] cluster.

Its subcellular location is the cytoplasm. The catalysed reaction is N(6)-dimethylallyladenosine(37) in tRNA + (sulfur carrier)-SH + AH2 + 2 S-adenosyl-L-methionine = 2-methylsulfanyl-N(6)-dimethylallyladenosine(37) in tRNA + (sulfur carrier)-H + 5'-deoxyadenosine + L-methionine + A + S-adenosyl-L-homocysteine + 2 H(+). Functionally, catalyzes the methylthiolation of N6-(dimethylallyl)adenosine (i(6)A), leading to the formation of 2-methylthio-N6-(dimethylallyl)adenosine (ms(2)i(6)A) at position 37 in tRNAs that read codons beginning with uridine. The chain is tRNA-2-methylthio-N(6)-dimethylallyladenosine synthase from Rhodopseudomonas palustris (strain ATCC BAA-98 / CGA009).